The chain runs to 456 residues: tRNA modification GTPase MnmE (456 aa).

Positions 21, 85, and 124 each coordinate (6S)-5-formyl-5,6,7,8-tetrahydrofolate. The TrmE-type G domain occupies Gln220–Gly379. Asn230 is a binding site for K(+). GTP-binding positions include Asn230–Ser235, Ser249–Thr255, and Asp274–Gly277. Ser234 is a Mg(2+) binding site. Ser249, Ile251, and Thr254 together coordinate K(+). A Mg(2+)-binding site is contributed by Thr255. A (6S)-5-formyl-5,6,7,8-tetrahydrofolate-binding site is contributed by Lys456.

The protein belongs to the TRAFAC class TrmE-Era-EngA-EngB-Septin-like GTPase superfamily. TrmE GTPase family. Homodimer. Heterotetramer of two MnmE and two MnmG subunits. K(+) is required as a cofactor.

Its subcellular location is the cytoplasm. In terms of biological role, exhibits a very high intrinsic GTPase hydrolysis rate. Involved in the addition of a carboxymethylaminomethyl (cmnm) group at the wobble position (U34) of certain tRNAs, forming tRNA-cmnm(5)s(2)U34. The polypeptide is tRNA modification GTPase MnmE (Leptospira interrogans serogroup Icterohaemorrhagiae serovar copenhageni (strain Fiocruz L1-130)).